We begin with the raw amino-acid sequence, 248 residues long: Probable transcriptional regulatory protein BOV_1660 (248 aa).

The protein belongs to the TACO1 family.

The protein resides in the cytoplasm. This chain is Probable transcriptional regulatory protein BOV_1660, found in Brucella ovis (strain ATCC 25840 / 63/290 / NCTC 10512).